The sequence spans 30 residues: Rothein 3.4 (30 aa).

Position 30 is a leucine amide (Leu-30).

The protein belongs to the frog skin active peptide (FSAP) family. Rothein subfamily. As to expression, expressed by the skin dorsal glands.

It localises to the secreted. Functionally, lacks antimicrobial activity. Does not inhibit the formation of NO by neuronal nitric oxide. The sequence is that of Rothein 3.4 from Litoria rothii (Roth's tree frog).